The primary structure comprises 393 residues: Purine permease 14 (393 aa).

Position 2 is an N-acetylalanine (A2). Helical transmembrane passes span 46 to 66 (WPTI…AKLL), 90 to 110 (TQSL…LIFI), 133 to 153 (LAVI…LAAM), 161 to 181 (GVFT…AAFI), 189 to 209 (WVVI…SSSF), 225 to 245 (WAAL…QNVF), 268 to 288 (VIIF…LIAG), 308 to 328 (VMAM…IVGL), 339 to 359 (VISV…FNFM), and 363 to 383 (FDAF…AYFF).

This sequence belongs to the purine permeases (TC 2.A.7.14) family. Expressed in seedlings, leaves, embryos, ovules, seeds and the root and shoot meristems. In heart-stage embryos, detected in cells that failed to respond to cytokinins, including the prospective cotyledons.

Its subcellular location is the cell membrane. In terms of biological role, purine permease implicated in ATP-dependent cytokinin translocation that controls the spatiotemporal landscape of cytokinin signaling. Depletes ligands from the apoplast, which leads to a suppression of the cytokinin response. This chain is Purine permease 14, found in Arabidopsis thaliana (Mouse-ear cress).